Consider the following 4814-residue polypeptide: Nonribosomal peptide synthetase SIDC (4814 aa).

The tract at residues 21–453 is adenylation 1; sequence PGPTLLHQLV…MKTSGCHGAA (433 aa). The Carrier 1 domain occupies 528-601; sequence DLKKSTEPEL…HLVSSIKIID (74 aa). Ser-562 is subject to O-(pantetheine 4'-phosphoryl)serine. The tract at residues 637–1045 is condensation 1; the sequence is VQDIIPCTNL…SLLESMRSME (409 aa). Residues 1101 to 1488 form an adenylation 2 region; the sequence is TYTDLNRNAN…SRVSSATAAV (388 aa). Carrier domains are found at residues 1589–1666 and 2134–2210; these read EDWN…HSSH and SSWT…FENG. 2 positions are modified to O-(pantetheine 4'-phosphoryl)serine: Ser-1626 and Ser-2171. Condensation regions lie at residues 1706–2210 and 2243–2649; these read LQEA…FENG and LPCT…HQHD. Positions 2709 to 3100 are adenylation 3; that stretch reads TFAQLNSIGN…IRSVKNIHDV (392 aa). Residues 3203 to 3280 form the Carrier 4 domain; the sequence is SKDSAGYQKL…DLAVALSTAS (78 aa). Position 3240 is an O-(pantetheine 4'-phosphoryl)serine (Ser-3240). The tract at residues 3319–3732 is condensation 4; the sequence is YIYPCSPLQQ…VQVETALVDA (414 aa). One can recognise a Carrier 5 domain in the interval 3747-3823; the sequence is EVWGPAADVL…YLSSLVMRLT (77 aa). An O-(pantetheine 4'-phosphoryl)serine modification is found at Ser-3784. Positions 3857–4258 are condensation 5; it reads DILPTTPLQD…YVLRHAEEDV (402 aa). The Carrier 6 domain maps to 4295–4368; that stretch reads NATSLAIRKV…HMAEQVAALG (74 aa). The residue at position 4329 (Ser-4329) is an O-(pantetheine 4'-phosphoryl)serine. The condensation 6 stretch occupies residues 4504–4686; the sequence is ETLLRLRIHH…HEDMQKITAD (183 aa).

This sequence belongs to the NRP synthetase family. The cofactor is pantetheine 4'-phosphate.

Its pathway is siderophore biosynthesis. Functionally, nonribosomal peptide synthetase; part of the gene cluster that mediates the biosynthesis of at least 11 siderophores, including beauverichelin A, dimerumic acid (DA), Na-dimethyl coprogen (NADC), eleutherazine B, ferricrocin (FC), fusarinine A, fusarinine C (FsC), metachelin A, mevalonolactone, rhodotorulic acid (RA) and tenellin. This cocktail of siderophores for iron metabolism is essential for virulence, and more specifically for the fungal virulence in penetrating through the host cuticle. Siderophore synthesis is also involved in conidial germination under iron-deficient conditions. SIDC catalyzes the assembly of ferricrocin whereas SIDD catalyzes the assembly of fusarinine C. In Beauveria bassiana (strain ARSEF 2860) (White muscardine disease fungus), this protein is Nonribosomal peptide synthetase SIDC.